The primary structure comprises 156 residues: Small ribosomal subunit protein uS7 (156 aa).

Belongs to the universal ribosomal protein uS7 family. As to quaternary structure, part of the 30S ribosomal subunit. Contacts proteins S9 and S11.

In terms of biological role, one of the primary rRNA binding proteins, it binds directly to 16S rRNA where it nucleates assembly of the head domain of the 30S subunit. Is located at the subunit interface close to the decoding center, probably blocks exit of the E-site tRNA. The polypeptide is Small ribosomal subunit protein uS7 (Ruegeria pomeroyi (strain ATCC 700808 / DSM 15171 / DSS-3) (Silicibacter pomeroyi)).